The following is a 701-amino-acid chain: C6 finger domain transcription factor nscR (701 aa).

A DNA-binding region (zn(2)-C6 fungal-type) is located at residues 17–43 (CELCRERKVKCDKLDPCTNCSSAGVIC).

Its subcellular location is the nucleus. In terms of biological role, transcription factor that specifically regulates the neosartoricin B biosynthesis gene cluster. In Arthroderma benhamiae (strain ATCC MYA-4681 / CBS 112371) (Trichophyton mentagrophytes), this protein is C6 finger domain transcription factor nscR.